The chain runs to 358 residues: Core-capsid bridging protein (358 aa).

The interval 296-331 (PSITPTPGYRGTTFKPSRTRSTRRRRSVRRRSRRTA) is disordered. The span at 312-329 (SRTRSTRRRRSVRRRSRR) shows a compositional bias: basic residues.

It belongs to the adenoviridae core-capsid bridging protein family. In terms of assembly, monomer. Homodimer. Exists in equilibrium between monomers and dimers in solution. Interacts with the histone-like nucleoprotein; this interactions bridge the virus core to the capsid. Interacts with core protein X; this interactions bridge the virus core to the capsid. Interacts with the endosome lysis protein VI; this interactions bridge the virus core to the capsid. Interacts with the peripentonal hexons. Interacts with host NPM1; this interaction might play a role in virus assembly.

Its subcellular location is the virion. It is found in the host nucleus. The protein localises to the host nucleolus. In terms of biological role, associates loosely with the viral DNA to form an outer shell around the nucleoprotein-DNA complex and links it with the capsid by binding the endosome lysis protein. Dissociates from the viral genome during entry. Might be involved in nuclear capsid assembly of the viral particles through its association with NPM1/nucleophosmin. The protein is Core-capsid bridging protein of Human adenovirus F serotype 40 (HAdV-40).